The primary structure comprises 310 residues: Ribosomal RNA small subunit methyltransferase H (310 aa).

S-adenosyl-L-methionine contacts are provided by residues 33–35 (AGH), Asp-53, Phe-79, Asp-100, and Gln-107.

This sequence belongs to the methyltransferase superfamily. RsmH family.

Its subcellular location is the cytoplasm. It carries out the reaction cytidine(1402) in 16S rRNA + S-adenosyl-L-methionine = N(4)-methylcytidine(1402) in 16S rRNA + S-adenosyl-L-homocysteine + H(+). In terms of biological role, specifically methylates the N4 position of cytidine in position 1402 (C1402) of 16S rRNA. In Clostridium beijerinckii (strain ATCC 51743 / NCIMB 8052) (Clostridium acetobutylicum), this protein is Ribosomal RNA small subunit methyltransferase H.